The sequence spans 675 residues: Serine/threonine-protein kinase ATG1 (675 aa).

In terms of domain architecture, Protein kinase spans 25–328; the sequence is FVIGGEIGKG…FEDFFNDPVV (304 aa). ATP contacts are provided by residues 31-39 and K54; that span reads IGKGSFAQV. D168 serves as the catalytic Proton acceptor. Residues 339–374 show a composition bias toward basic and acidic residues; that stretch reads DIPKVEQKPSRDLRSLEADPQREQSELAKSPRERPL. Disordered regions lie at residues 339-455 and 501-577; these read DIPK…ERKL and RLTS…TTRS. Polar residues-rich tracts occupy residues 390–399, 516–538, and 556–565; these read ANVSARTGQS, ATQQ…SAVQ, and ASRSLNTSSA.

It belongs to the protein kinase superfamily. Ser/Thr protein kinase family. APG1/unc-51/ULK1 subfamily. In terms of assembly, homodimer. Forms a ternary complex with ATG13 and ATG17.

It localises to the cytoplasm. The protein resides in the preautophagosomal structure membrane. The enzyme catalyses L-seryl-[protein] + ATP = O-phospho-L-seryl-[protein] + ADP + H(+). It carries out the reaction L-threonyl-[protein] + ATP = O-phospho-L-threonyl-[protein] + ADP + H(+). Serine/threonine protein kinase involved in the cytoplasm to vacuole transport (Cvt) and found to be essential in autophagy, where it is required for the formation of autophagosomes. Involved in the clearance of protein aggregates which cannot be efficiently cleared by the proteasome. Required for selective autophagic degradation of the nucleus (nucleophagy) as well as for mitophagy which contributes to regulate mitochondrial quantity and quality by eliminating the mitochondria to a basal level to fulfill cellular energy requirements and preventing excess ROS production. Also involved in endoplasmic reticulum-specific autophagic process, in selective removal of ER-associated degradation (ERAD) substrates. Plays a key role in ATG9 and ATG23 cycling through the pre-autophagosomal structure and is necessary to promote ATG18 binding to ATG9 through phosphorylation of ATG9. Catalyzes phosphorylation of ATG4, decreasing the interaction between ATG4 and ATG8 and impairing deconjugation of PE-conjugated forms of ATG8. This is Serine/threonine-protein kinase ATG1 from Colletotrichum lindemuthianum (Bean anthracnose fungus).